Reading from the N-terminus, the 959-residue chain is Isoleucine--tRNA ligase (959 aa).

The short motif at 60-70 (PYANGSLHIGH) is the 'HIGH' region element. Glu571 serves as a coordination point for L-isoleucyl-5'-AMP. The 'KMSKS' region motif lies at 612-616 (KMSKS). Lys615 provides a ligand contact to ATP. Residues Cys928, Cys931, Cys948, and Cys951 each contribute to the Zn(2+) site.

The protein belongs to the class-I aminoacyl-tRNA synthetase family. IleS type 1 subfamily. Monomer. Zn(2+) is required as a cofactor.

It localises to the cytoplasm. The catalysed reaction is tRNA(Ile) + L-isoleucine + ATP = L-isoleucyl-tRNA(Ile) + AMP + diphosphate. Its function is as follows. Catalyzes the attachment of isoleucine to tRNA(Ile). As IleRS can inadvertently accommodate and process structurally similar amino acids such as valine, to avoid such errors it has two additional distinct tRNA(Ile)-dependent editing activities. One activity is designated as 'pretransfer' editing and involves the hydrolysis of activated Val-AMP. The other activity is designated 'posttransfer' editing and involves deacylation of mischarged Val-tRNA(Ile). The sequence is that of Isoleucine--tRNA ligase from Nostoc punctiforme (strain ATCC 29133 / PCC 73102).